Here is a 353-residue protein sequence, read N- to C-terminus: Histidinol-phosphate aminotransferase (353 aa).

An N6-(pyridoxal phosphate)lysine modification is found at Lys209.

This sequence belongs to the class-II pyridoxal-phosphate-dependent aminotransferase family. Histidinol-phosphate aminotransferase subfamily. Homodimer. It depends on pyridoxal 5'-phosphate as a cofactor.

The enzyme catalyses L-histidinol phosphate + 2-oxoglutarate = 3-(imidazol-4-yl)-2-oxopropyl phosphate + L-glutamate. It participates in amino-acid biosynthesis; L-histidine biosynthesis; L-histidine from 5-phospho-alpha-D-ribose 1-diphosphate: step 7/9. This Buchnera aphidicola subsp. Cinara cedri (strain Cc) protein is Histidinol-phosphate aminotransferase.